The following is a 288-amino-acid chain: Quinate/shikimate dehydrogenase (288 aa).

Substrate-binding residues include Lys-71 and Asp-107. NAD(+) contacts are provided by residues 132–135 (AGGA), 155–158 (NRRD), Lys-205, 232–235 (CVYN), and Gly-255.

It belongs to the shikimate dehydrogenase family. As to quaternary structure, homodimer.

The catalysed reaction is L-quinate + NAD(+) = 3-dehydroquinate + NADH + H(+). The enzyme catalyses L-quinate + NADP(+) = 3-dehydroquinate + NADPH + H(+). It carries out the reaction shikimate + NADP(+) = 3-dehydroshikimate + NADPH + H(+). It catalyses the reaction shikimate + NAD(+) = 3-dehydroshikimate + NADH + H(+). It functions in the pathway metabolic intermediate biosynthesis; chorismate biosynthesis; chorismate from D-erythrose 4-phosphate and phosphoenolpyruvate: step 4/7. The actual biological function of YdiB remains unclear, nor is it known whether 3-dehydroshikimate or quinate represents the natural substrate. Catalyzes the reversible NAD-dependent reduction of both 3-dehydroshikimate (DHSA) and 3-dehydroquinate to yield shikimate (SA) and quinate, respectively. It can use both NAD or NADP for catalysis, however it has higher catalytic efficiency with NAD. In Escherichia coli O1:K1 / APEC, this protein is Quinate/shikimate dehydrogenase.